Reading from the N-terminus, the 452-residue chain is Pup--protein ligase (452 aa).

E9 is a Mg(2+) binding site. R53 lines the ATP pocket. A Mg(2+)-binding site is contributed by Y55. Residue D57 is the Proton acceptor of the active site. Position 63 (E63) interacts with Mg(2+). ATP contacts are provided by T66 and W419.

This sequence belongs to the Pup ligase/Pup deamidase family. Pup-conjugating enzyme subfamily.

It carries out the reaction ATP + [prokaryotic ubiquitin-like protein]-L-glutamate + [protein]-L-lysine = ADP + phosphate + N(6)-([prokaryotic ubiquitin-like protein]-gamma-L-glutamyl)-[protein]-L-lysine.. Its pathway is protein degradation; proteasomal Pup-dependent pathway. It participates in protein modification; protein pupylation. In terms of biological role, catalyzes the covalent attachment of the prokaryotic ubiquitin-like protein modifier Pup to the proteasomal substrate proteins, thereby targeting them for proteasomal degradation. This tagging system is termed pupylation. The ligation reaction involves the side-chain carboxylate of the C-terminal glutamate of Pup and the side-chain amino group of a substrate lysine. The protein is Pup--protein ligase of Streptosporangium roseum (strain ATCC 12428 / DSM 43021 / JCM 3005 / KCTC 9067 / NCIMB 10171 / NRRL 2505 / NI 9100).